The sequence spans 434 residues: Methylenetetrahydrofolate--tRNA-(uracil-5-)-methyltransferase TrmFO (434 aa).

Glycine 9 to glycine 14 contributes to the FAD binding site.

This sequence belongs to the MnmG family. TrmFO subfamily. FAD serves as cofactor.

It is found in the cytoplasm. The enzyme catalyses uridine(54) in tRNA + (6R)-5,10-methylene-5,6,7,8-tetrahydrofolate + NADH + H(+) = 5-methyluridine(54) in tRNA + (6S)-5,6,7,8-tetrahydrofolate + NAD(+). The catalysed reaction is uridine(54) in tRNA + (6R)-5,10-methylene-5,6,7,8-tetrahydrofolate + NADPH + H(+) = 5-methyluridine(54) in tRNA + (6S)-5,6,7,8-tetrahydrofolate + NADP(+). In terms of biological role, catalyzes the folate-dependent formation of 5-methyl-uridine at position 54 (M-5-U54) in all tRNAs. The polypeptide is Methylenetetrahydrofolate--tRNA-(uracil-5-)-methyltransferase TrmFO (Bacillus licheniformis (strain ATCC 14580 / DSM 13 / JCM 2505 / CCUG 7422 / NBRC 12200 / NCIMB 9375 / NCTC 10341 / NRRL NRS-1264 / Gibson 46)).